A 538-amino-acid polypeptide reads, in one-letter code: MITASSAILLVALIAALWRLSLIGQRPKDYPPGPPTLPILGNLHQIPKARRHIQFEKWARQYGPVYSLILGTKVMIVLNTEDAIRELVDKRGAIYASRPESFIAQDTISGGLRILWMHNGETWKMVRKLAHRILNITTARTYVPYQDLETKRMLVDFLEKPDSFIEHMRRFSTSLTTQMTFGFRTTTIHDPRFKESFDIFDESWELVASPVAALMDFFPFLRKIPDFLLPVKREAKKLHQREITLFRDHYFETRRKLQDGTAKPCVCVDLMKLQKEESFSDNLAAYIGGSLLQAGSETTAGVLVGFIQAITIFPSVAKIAQEEIDYICGDRLPDLNDVPDLPYVRACTKETLRWMPGFLLGLPHAATRDDVYLGYRIPNKATILMNVWAVHNNPEQYPNPRTFDPRRYMDHEYYPQTAANTEVTRDHFAFGAGRRRCQGIHIAERSLFLSISRLLWAFDFKRAVDPVTKLEIFPSMDDLSDGAFTQPNTFPARIVPRSEEKARRVGEEWGKVLELLDGDMQWRTVPEGLIWRDYEAVA.

Residues 4 to 24 (ASSAILLVALIAALWRLSLIG) traverse the membrane as a helical segment. A heme-binding site is contributed by C437.

Belongs to the cytochrome P450 family. Heme serves as cofactor.

Its subcellular location is the membrane. It functions in the pathway secondary metabolite biosynthesis. In terms of biological role, cytochrome P450 monooxygenase; part of the gene cluster that mediates the biosynthesis of flavoglaucin and congeners (including aspergin, dihydroauroglaucin and auroglaucin), prenylated salicylaldehyde derivatives carrying a saturated or an unsaturated C-7 side chain. The PKS fogA releases the carboxylic acid (8E,10E,12E)-3,5,7-trihydroxytetradeca-8,10,12-trienoic acid as its product, as well as derivatives with one and two double bonds. FogA is indeed able to reduce the initial triketide, thus being at least partially responsible for the differently saturated heptyl side chains of flavoglaucin congeners. The oxidoreductases fogB, fogC and fogD modify the nascent polyketide in fogA-bound form and, together, fogA, fogB, fogC and fogD are necessary for the formation of the aromatic core and the cyclized PKS products are released as salicyl alcohols. In particular, fogB is responsible for oxidation of a hydroxyl group or reduction of remaining double bond(s) at the C-7 residue whereas fogD is probably involved in the reductive release of the modified PKS products. The cytochrome P450 monooxygenase fogE is then responsible for the hydroxylation at C-3 of the benzene ring. The fogE products are substrates of the prenyltransferase fogH and the prenylated benzyl alcohols are subsequently oxidized by the fogF to produce the final aryl aldehydes flavoglaucin and congeners. The short-chain dehydrogenase fogG does not seem to be involved in the biosynthesis of the prenylated salicylaldehyde derivatives. In Aspergillus ruber (strain CBS 135680), this protein is Cytochrome P450 monooxygenase fogE.